We begin with the raw amino-acid sequence, 1107 residues long: Unconventional myosin-Ie (1107 aa).

Positions 19 to 692 (SGVDDMVLLS…SLFLLEEMRE (674 aa)) constitute a Myosin motor domain. Position 112-119 (112-119 (GESGAGKT)) interacts with ATP. An actin-binding region spans residues 581 to 591 (PHYIRCIKPNE). Residues 695–724 (YDGYARVIQKTWRKFVARKKYVQMREEASD) form the IQ domain. Residues 730–922 (KERRRNSINR…NKVLQVSIGP (193 aa)) enclose the TH1 domain. Residues 919–1052 (SIGPGLPKNS…KPQPKPKPQV (134 aa)) are disordered. 2 stretches are compositionally biased toward polar residues: residues 979–989 (NQRSNQKSLYT) and 998–1012 (RQQS…QTPE). Ser1001 carries the post-translational modification Phosphoserine. Over residues 1034–1051 (RPPPAGGRPKPQPKPKPQ) the composition is skewed to pro residues. Positions 1050–1107 (PQVPQCKALYAYDAQDTDELSFNANDIIDIIKEDPSGWWTGRLRGKQGLFPNNYVTKI) constitute an SH3 domain.

Belongs to the TRAFAC class myosin-kinesin ATPase superfamily. Myosin family. Interacts with CALM and F-actin. Interacts (via SH3 domain) with SYNJ1, DNM1 and DNM2. Interacts with ARL14EP. Interacts with CARMIL1. As to expression, detected in kidney glomeruli (at protein level). Detected in utricle.

The protein resides in the cytoplasm. The protein localises to the cell junction. Its subcellular location is the cytoplasmic vesicle. It is found in the clathrin-coated vesicle. It localises to the cytoskeleton. Functionally, myosins are actin-based motor molecules with ATPase activity. Unconventional myosins serve in intracellular movements. Their highly divergent tails bind to membranous compartments, which are then moved relative to actin filaments. Binds to membranes containing anionic phospholipids via its tail domain. Involved in clathrin-mediated endocytosis and intracellular movement of clathrin-coated vesicles. Required for normal morphology of the glomerular basement membrane, normal development of foot processes by kidney podocytes and normal kidney function. In dendritic cells, may control the movement of class II-containing cytoplasmic vesicles along the actin cytoskeleton by connecting them with the actin network via ARL14EP and ARL14. This chain is Unconventional myosin-Ie (Myo1e), found in Mus musculus (Mouse).